A 1063-amino-acid polypeptide reads, in one-letter code: E3 ubiquitin-protein ligase PDZRN3 (1063 aa).

The segment at 18–56 (CALCHKVLEDPLTTPCGHVFCAGCVLPWVVQEGSCPARC) adopts an RING-type; degenerate zinc-finger fold. The TRAF-type zinc-finger motif lies at 100 to 158 (EHLERCDFAPARCRHAGCGQLLLRRDVEAHMRDACDARPVGRCQEGCGLPLTHGEQRAG). 2 PDZ domains span residues 249-339 (TLVL…LRRT) and 419-503 (EVGL…IARP). Serine 427 is modified (phosphoserine). The disordered stretch occupies residues 545–602 (QKKHEEDGGTTDTATILSNQHEKDSGVGRTDESTRNDESSEQENNGEDATASANPLAG). The segment covering 554-563 (TTDTATILSN) has biased composition (polar residues). Over residues 564-582 (QHEKDSGVGRTDESTRNDE) the composition is skewed to basic and acidic residues. A coiled-coil region spans residues 680–705 (ESVDKELELLNEELRSIELECLSIVR). Residues 746 to 755 (ELPEKSDKDS) show a composition bias toward basic and acidic residues. 2 disordered regions span residues 746–798 (ELPE…IEAY) and 834–853 (IKER…PKLG). Polar residues predominate over residues 756–770 (SSAYNTGESCRSTPL).

In terms of assembly, interacts with NLGN1 and EFNB2. Interacts with UBE2D2 and with MUSK via the first PDZ domain. In myotubes, the interaction between PDZRN3 and MUSK is enhanced upon agrin stimulation. Post-translationally, auto-ubiquitinated. In terms of tissue distribution, highly expressed in skeletal and cardiac muscle and at lower levels in spinal cord and brain (at protein level). Also expressed in kidney and lung. In muscles, concentrated at the neuromuscular junction (NMJ).

It is found in the synapse. The protein resides in the cytoplasm. It catalyses the reaction S-ubiquitinyl-[E2 ubiquitin-conjugating enzyme]-L-cysteine + [acceptor protein]-L-lysine = [E2 ubiquitin-conjugating enzyme]-L-cysteine + N(6)-ubiquitinyl-[acceptor protein]-L-lysine.. It functions in the pathway protein modification; protein ubiquitination. In terms of biological role, E3 ubiquitin-protein ligase. Plays an important role in regulating the surface level of MUSK on myotubes. Mediates the ubiquitination of MUSK, promoting its endocytosis and lysosomal degradation. Might contribute to terminal myogenic differentiation. This chain is E3 ubiquitin-protein ligase PDZRN3 (Pdzrn3), found in Mus musculus (Mouse).